A 201-amino-acid polypeptide reads, in one-letter code: Small ribosomal subunit protein uS4 (201 aa).

The interval methionine 1–lysine 42 is disordered. Positions serine 91 to alanine 157 constitute an S4 RNA-binding domain.

The protein belongs to the universal ribosomal protein uS4 family. As to quaternary structure, part of the 30S ribosomal subunit. Contacts protein S5. The interaction surface between S4 and S5 is involved in control of translational fidelity.

One of the primary rRNA binding proteins, it binds directly to 16S rRNA where it nucleates assembly of the body of the 30S subunit. Its function is as follows. With S5 and S12 plays an important role in translational accuracy. This is Small ribosomal subunit protein uS4 from Mycolicibacterium smegmatis (strain ATCC 700084 / mc(2)155) (Mycobacterium smegmatis).